Consider the following 141-residue polypeptide: ATP synthase epsilon chain (141 aa).

It belongs to the ATPase epsilon chain family. F-type ATPases have 2 components, CF(1) - the catalytic core - and CF(0) - the membrane proton channel. CF(1) has five subunits: alpha(3), beta(3), gamma(1), delta(1), epsilon(1). CF(0) has three main subunits: a, b and c.

The protein localises to the cell membrane. Produces ATP from ADP in the presence of a proton gradient across the membrane. This chain is ATP synthase epsilon chain, found in Natranaerobius thermophilus (strain ATCC BAA-1301 / DSM 18059 / JW/NM-WN-LF).